The following is a 416-amino-acid chain: MEQSEDGDLDAGDELFEEVDGDGKGEIFANRELLNIDHVPDENRIVGRDEHITELANEIGPAVTGSPPNSVILYGKTGSGKSLVANHVMERARREAQRRDRRLATVTVDCAQSRGEADTVQTIADKINRSTSGVTVPTRGISTNEYYNRLWQILGTEYDAALITLDEVDRLSDDDILMILSRAREAGKVDVPIGIISISNKVNFREQMTERVKSSLGHNEMIFDPYDGEQLRQILENRKDAFQEDILMPGVIPKTAALAAQRHGDARKAIRLLRHAGDYAKTNNIGTVKESHLELAQEQAEVERLKELISGLPPHSKYVLYALANLTDGTTNSNDWFRTTVIYDVYEEVCKTEATDTLTTDTIRGLLNELAFLEITESNQEHGGMGKGTYKEHRLLWDPNVVFKMNPGSAQVDTDR.

ATP is bound by residues 79–83, Y226, and R238; that span reads SGKSL.

The protein belongs to the CDC6/cdc18 family.

Involved in regulation of DNA replication. In Haloarcula marismortui (strain ATCC 43049 / DSM 3752 / JCM 8966 / VKM B-1809) (Halobacterium marismortui), this protein is ORC1-type DNA replication protein 9 (cdc6i).